The following is a 201-amino-acid chain: Snake venom metalloproteinase trimerelysin-2 (201 aa).

A Pyrrolidone carboxylic acid modification is found at glutamine 1. The 196-residue stretch at 6–201 (RYIELAIVVD…YNPQCILNAP (196 aa)) folds into the Peptidase M12B domain. N-linked (GlcNAc...) asparagine glycosylation is present at asparagine 72. Cystine bridges form between cysteine 117–cysteine 196, cysteine 158–cysteine 180, and cysteine 160–cysteine 163. Histidine 142 contacts Zn(2+). The active site involves glutamate 143. Zn(2+)-binding residues include histidine 146 and histidine 152.

The protein belongs to the venom metalloproteinase (M12B) family. P-I subfamily. In terms of assembly, monomer. Zn(2+) is required as a cofactor. Expressed by the venom gland.

It localises to the secreted. The catalysed reaction is Cleavage of 3-Asn-|-Gln-4, 10-His-|-Leu-11 and 14-Ala-|-Leu-15 in the insulin B chain, and the bond Z-Gly-Pro-|-Leu-Gly-Pro in a small molecule substrate of microbial collagenase.. Functionally, major venom non-hemorrhagic metalloproteinase. This is Snake venom metalloproteinase trimerelysin-2 from Protobothrops flavoviridis (Habu).